The following is a 230-amino-acid chain: Uracil phosphoribosyltransferase (230 aa).

Residue 38–42 (KGLVK) participates in GTP binding. 5-phospho-alpha-D-ribose 1-diphosphate-binding positions include arginine 87, arginine 112, and 140–148 (DPMIATGST). Residues isoleucine 204 and 209-211 (GDA) contribute to the uracil site. Residue aspartate 210 coordinates 5-phospho-alpha-D-ribose 1-diphosphate.

It belongs to the UPRTase family. It depends on Mg(2+) as a cofactor.

The enzyme catalyses UMP + diphosphate = 5-phospho-alpha-D-ribose 1-diphosphate + uracil. Its pathway is pyrimidine metabolism; UMP biosynthesis via salvage pathway; UMP from uracil: step 1/1. Allosterically activated by GTP. In terms of biological role, catalyzes the conversion of uracil and 5-phospho-alpha-D-ribose 1-diphosphate (PRPP) to UMP and diphosphate. This is Uracil phosphoribosyltransferase from Thermococcus kodakarensis (strain ATCC BAA-918 / JCM 12380 / KOD1) (Pyrococcus kodakaraensis (strain KOD1)).